We begin with the raw amino-acid sequence, 173 residues long: Photosystem I assembly protein Ycf3 (173 aa).

TPR repeat units lie at residues 35–68 (AFVYYRDGMSAQADGEYKEALDNYYEALKLEDDA), 72–105 (SYILYNIGIIHGSNGEHERALEYYHEAIELNPNL), and 120–153 (GERAKEEGREDESEALFDKAAEYWKQAIRLAPNN).

The protein belongs to the Ycf3 family.

The protein localises to the cellular thylakoid membrane. Essential for the assembly of the photosystem I (PSI) complex. May act as a chaperone-like factor to guide the assembly of the PSI subunits. The protein is Photosystem I assembly protein Ycf3 of Gloeothece citriformis (strain PCC 7424) (Cyanothece sp. (strain PCC 7424)).